The primary structure comprises 345 residues: Histidinol-phosphate aminotransferase (345 aa).

Position 206 is an N6-(pyridoxal phosphate)lysine (Lys-206).

This sequence belongs to the class-II pyridoxal-phosphate-dependent aminotransferase family. Histidinol-phosphate aminotransferase subfamily. In terms of assembly, homodimer. The cofactor is pyridoxal 5'-phosphate.

It catalyses the reaction L-histidinol phosphate + 2-oxoglutarate = 3-(imidazol-4-yl)-2-oxopropyl phosphate + L-glutamate. The protein operates within amino-acid biosynthesis; L-histidine biosynthesis; L-histidine from 5-phospho-alpha-D-ribose 1-diphosphate: step 7/9. The sequence is that of Histidinol-phosphate aminotransferase from Bacteroides fragilis (strain ATCC 25285 / DSM 2151 / CCUG 4856 / JCM 11019 / LMG 10263 / NCTC 9343 / Onslow / VPI 2553 / EN-2).